The primary structure comprises 328 residues: Carbonic anhydrase-related protein 11 (328 aa).

The first 23 residues, 1 to 23 (MGAAARLSAPRALVLWAALGAAA), serve as a signal peptide directing secretion. Residues 33 to 303 (DWWSYKDNLQ…LAHRALRGNR (271 aa)) enclose the Alpha-carbonic anhydrase domain. 3 N-linked (GlcNAc...) asparagine glycosylation sites follow: N118, N170, and N260. The segment at 299-328 (LRGNRDPRHPERRCRGPNYRLHVDGAPHGR) is disordered. The segment covering 319-328 (LHVDGAPHGR) has biased composition (basic and acidic residues).

This sequence belongs to the alpha-carbonic anhydrase family.

It is found in the secreted. In terms of biological role, does not have a catalytic activity. This is Carbonic anhydrase-related protein 11 (CA11) from Pongo abelii (Sumatran orangutan).